A 192-amino-acid chain; its full sequence is Orotate phosphoribosyltransferase (192 aa).

Residue 116-124 (EDIVTTGLS) coordinates 5-phospho-alpha-D-ribose 1-diphosphate. Thr120 and Arg148 together coordinate orotate.

The protein belongs to the purine/pyrimidine phosphoribosyltransferase family. PyrE subfamily. Homodimer. Mg(2+) is required as a cofactor.

The enzyme catalyses orotidine 5'-phosphate + diphosphate = orotate + 5-phospho-alpha-D-ribose 1-diphosphate. It participates in pyrimidine metabolism; UMP biosynthesis via de novo pathway; UMP from orotate: step 1/2. In terms of biological role, catalyzes the transfer of a ribosyl phosphate group from 5-phosphoribose 1-diphosphate to orotate, leading to the formation of orotidine monophosphate (OMP). The polypeptide is Orotate phosphoribosyltransferase (Bartonella quintana (strain Toulouse) (Rochalimaea quintana)).